The sequence spans 106 residues: Thioredoxin (106 aa).

Positions 2–106 (VQVISNLDEF…LESLVQKSLA (105 aa)) constitute a Thioredoxin domain. Active-site nucleophile residues include cysteine 30 and cysteine 33. A disulfide bridge connects residues cysteine 30 and cysteine 33.

This sequence belongs to the thioredoxin family.

Its function is as follows. Participates in various redox reactions through the reversible oxidation of its active center dithiol to a disulfide and catalyzes dithiol-disulfide exchange reactions. The polypeptide is Thioredoxin (Coprinus comatus (Shaggy mane)).